The chain runs to 500 residues: MAQFGGFGGWSAMDVAAAAAAALGNVSGAVYHADPAAAVYASLVPGMAVVPGRAPPSAVQIEAARRWKELEKMALRSVNLMVTCAGAIQAGDYAAAAGSLSDAREIFAKMPTTRTGIGRVLTHFADALAERLFPAFPQSAPPPPPPRGEQRELFRGFYEAGPYLKFAHLAANQAILEAFEGCNSVHVIDFALTDGIQWPSLIQALAVRPGGPPFLRITGIGPHAAGNRDELRDVGLRLAEFARSCSVPFAFRGIAADQLDGLRPWMFQVAPGEAVAINSVLQLHRLLVDQDAAAAASFPAPIDGVLDWVASMNPRVFTVVEQEADHNKSSLLERFTNSLFYYASMFDSLEAISRHGGGDGAGNPLAEAYLQGEIADIVSREGSSRVERHEQMPRWVERLRRGGMTQLPLGATGLWQAAMQLREFSGAGFGVQENGGFLTLTWHSQRLYSASAWRATAGKKMTMMASGAADAMEESQNSNTNGGGGGSSGGGHGALNQIMQ.

In terms of domain architecture, GRAS spans 68–454; sequence KELEKMALRS…QRLYSASAWR (387 aa). The tract at residues 75 to 135 is leucine repeat I (LRI); the sequence is LRSVNLMVTC…DALAERLFPA (61 aa). Residues 154-219 form a VHIID region; the sequence is FRGFYEAGPY…GGPPFLRITG (66 aa). The short motif at 185-189 is the VHIID element; sequence VHVID. Residues 233–265 are leucine repeat II (LRII); the sequence is DVGLRLAEFARSCSVPFAFRGIAADQLDGLRPW. The segment at 275–376 is PFYRE; sequence VAINSVLQLH…EAYLQGEIAD (102 aa). An LXXLL motif motif is present at residues 283 to 287; the sequence is LHRLL. Positions 379 to 454 are SAW; sequence SREGSSRVER…QRLYSASAWR (76 aa). The interval 466-500 is disordered; that stretch reads SGAADAMEESQNSNTNGGGGGSSGGGHGALNQIMQ. Positions 481-493 are enriched in gly residues; the sequence is NGGGGGSSGGGHG.

The protein belongs to the GRAS family. Expressed at low levels in leaf blades, leaf sheaths, rachis and flowers. Expressed in the embryo of immature seeds.

It is found in the nucleus. In terms of biological role, probable transcriptional regulator that acts as a repressor of the gibberellin (GA) signaling pathway. Its repressive activity is weaker than that of SLR1. Its overexpression prevents the GA signaling pathway and induces a dwarf phenotype in Arabidopsis thaliana plants. In Oryza sativa subsp. japonica (Rice), this protein is Protein SLENDER RICE1-LIKE 2.